The sequence spans 216 residues: MAAEMRVTVSQLLKGIDRYNPENLKVLEHYVHLQVHENAYDLDANLAVLKLYQFNPAYSQTSVISQILLKALMNLPNADFIMCRCVIDDAIQQDLTIKKVILLAERLETCAFTSAWQFIKEEASLVDGVTGFHDAIRNYITYVIGVTYQTIEESLASELLGGLQGAQLQDWIKAKGWMSSDDGTIYVTNQEAHIKSKNIAEKIDFASVANIIAAAR.

A PCI domain is found at Tyr-40 to Lys-202.

The protein belongs to the eIF-3 subunit K family. As to quaternary structure, component of the eukaryotic translation initiation factor 3 (eIF-3) complex.

It is found in the cytoplasm. Functionally, component of the eukaryotic translation initiation factor 3 (eIF-3) complex, which is involved in protein synthesis of a specialized repertoire of mRNAs and, together with other initiation factors, stimulates binding of mRNA and methionyl-tRNAi to the 40S ribosome. The eIF-3 complex specifically targets and initiates translation of a subset of mRNAs involved in cell proliferation. The sequence is that of Eukaryotic translation initiation factor 3 subunit K from Nematostella vectensis (Starlet sea anemone).